Here is a 647-residue protein sequence, read N- to C-terminus: Threonine--tRNA ligase (647 aa).

The TGS domain maps to 1 to 61 (MINITFPDGA…TEDGSIEIVT (61 aa)). Residues 242 to 540 (DHRKLGKELD…LIENYKGAFP (299 aa)) are catalytic. Residues C336, H387, and H517 each contribute to the Zn(2+) site.

This sequence belongs to the class-II aminoacyl-tRNA synthetase family. Homodimer. It depends on Zn(2+) as a cofactor.

The protein localises to the cytoplasm. It catalyses the reaction tRNA(Thr) + L-threonine + ATP = L-threonyl-tRNA(Thr) + AMP + diphosphate + H(+). Functionally, catalyzes the attachment of threonine to tRNA(Thr) in a two-step reaction: L-threonine is first activated by ATP to form Thr-AMP and then transferred to the acceptor end of tRNA(Thr). Also edits incorrectly charged L-seryl-tRNA(Thr). The polypeptide is Threonine--tRNA ligase (Streptococcus pneumoniae (strain 70585)).